Here is a 314-residue protein sequence, read N- to C-terminus: 4-hydroxy-3-methylbut-2-enyl diphosphate reductase (314 aa).

Position 12 (C12) interacts with [4Fe-4S] cluster. Residues H43 and H81 each contribute to the (2E)-4-hydroxy-3-methylbut-2-enyl diphosphate site. Dimethylallyl diphosphate-binding residues include H43 and H81. Positions 43 and 81 each coordinate isopentenyl diphosphate. C103 contacts [4Fe-4S] cluster. H131 contacts (2E)-4-hydroxy-3-methylbut-2-enyl diphosphate. Dimethylallyl diphosphate is bound at residue H131. An isopentenyl diphosphate-binding site is contributed by H131. E133 (proton donor) is an active-site residue. Residue T170 participates in (2E)-4-hydroxy-3-methylbut-2-enyl diphosphate binding. C198 lines the [4Fe-4S] cluster pocket. (2E)-4-hydroxy-3-methylbut-2-enyl diphosphate is bound by residues S226, N228, and S271. The dimethylallyl diphosphate site is built by S226, N228, and S271. Residues S226, N228, and S271 each coordinate isopentenyl diphosphate.

This sequence belongs to the IspH family. Requires [4Fe-4S] cluster as cofactor.

The enzyme catalyses isopentenyl diphosphate + 2 oxidized [2Fe-2S]-[ferredoxin] + H2O = (2E)-4-hydroxy-3-methylbut-2-enyl diphosphate + 2 reduced [2Fe-2S]-[ferredoxin] + 2 H(+). It catalyses the reaction dimethylallyl diphosphate + 2 oxidized [2Fe-2S]-[ferredoxin] + H2O = (2E)-4-hydroxy-3-methylbut-2-enyl diphosphate + 2 reduced [2Fe-2S]-[ferredoxin] + 2 H(+). It participates in isoprenoid biosynthesis; dimethylallyl diphosphate biosynthesis; dimethylallyl diphosphate from (2E)-4-hydroxy-3-methylbutenyl diphosphate: step 1/1. It functions in the pathway isoprenoid biosynthesis; isopentenyl diphosphate biosynthesis via DXP pathway; isopentenyl diphosphate from 1-deoxy-D-xylulose 5-phosphate: step 6/6. Catalyzes the conversion of 1-hydroxy-2-methyl-2-(E)-butenyl 4-diphosphate (HMBPP) into a mixture of isopentenyl diphosphate (IPP) and dimethylallyl diphosphate (DMAPP). Acts in the terminal step of the DOXP/MEP pathway for isoprenoid precursor biosynthesis. This is 4-hydroxy-3-methylbut-2-enyl diphosphate reductase from Shouchella clausii (strain KSM-K16) (Alkalihalobacillus clausii).